The following is a 274-amino-acid chain: uncharacterized protein (274 aa).

The protein belongs to the type II cytokine receptor family.

This is an uncharacterized protein from Sus scrofa (Pig).